Consider the following 438-residue polypeptide: Rhomboid-related protein 1 (438 aa).

Positions M1–S62 are disordered. Over residues G8–D17 the composition is skewed to acidic residues. Transmembrane regions (helical) follow at residues P196 to A216, G262 to L282, I284 to M304, V308 to M328, L340 to L359, P372 to L392, and W405 to F425. Catalysis depends on S312, which acts as the Nucleophile. H377 is an active-site residue.

It belongs to the peptidase S54 family. In terms of tissue distribution, detected in heart, brain, skeletal muscle and kidney.

The protein localises to the membrane. The enzyme catalyses Cleaves type-1 transmembrane domains using a catalytic dyad composed of serine and histidine that are contributed by different transmembrane domains.. Functionally, may be involved in regulated intramembrane proteolysis and the subsequent release of functional polypeptides from their membrane anchors. In Homo sapiens (Human), this protein is Rhomboid-related protein 1 (RHBDL1).